A 93-amino-acid polypeptide reads, in one-letter code: CRISPR-associated endoribonuclease Cas2 (93 aa).

Residue D13 coordinates Mg(2+).

This sequence belongs to the CRISPR-associated endoribonuclease Cas2 protein family. In terms of assembly, homodimer, forms a heterotetramer with a Cas1 homodimer. Requires Mg(2+) as cofactor.

CRISPR (clustered regularly interspaced short palindromic repeat), is an adaptive immune system that provides protection against mobile genetic elements (viruses, transposable elements and conjugative plasmids). CRISPR clusters contain sequences complementary to antecedent mobile elements and target invading nucleic acids. CRISPR clusters are transcribed and processed into CRISPR RNA (crRNA). Functions as a ssRNA-specific endoribonuclease. Involved in the integration of spacer DNA into the CRISPR cassette. The chain is CRISPR-associated endoribonuclease Cas2 from Korarchaeum cryptofilum (strain OPF8).